Here is a 516-residue protein sequence, read N- to C-terminus: mRNA export factor ICP27 homolog (516 aa).

Zn(2+) is bound by residues Cys231, His336, Cys338, and Cys343. A CHC2-type zinc finger spans residues 231–343; the sequence is CVFNDNGHGD…SNHKCDDVSC (113 aa). The span at 399 to 409 shows a compositional bias: polar residues; the sequence is YSTSRDLPQTS. Residues 399 to 423 form a disordered region; the sequence is YSTSRDLPQTSHRSHKNQGTPKVKS.

The protein belongs to the HHV-1 ICP27 protein family.

It is found in the virion tegument. The protein resides in the virion. The protein localises to the host nucleus. It localises to the host cytoplasm. Its function is as follows. Immediate early (EI) protein that plays many roles during productive infection including regulation of viral gene expression and nuclear export of intronless viral RNAs. The polypeptide is mRNA export factor ICP27 homolog (Homo sapiens (Human)).